The primary structure comprises 1087 residues: Gelsolin-related protein of 125 kDa (1087 aa).

The tract at residues 1 to 40 (MEEDNIVDSKEIENNVEDKKEETPSSSPSPSSSLQQQQEE) is disordered. Basic and acidic residues predominate over residues 7-23 (VDSKEIENNVEDKKEET). Low complexity predominate over residues 24–40 (PSSSPSPSSSLQQQQEE). 4 Gelsolin-like repeats span residues 73 to 146 (PFHF…PTFL), 183 to 286 (FLFK…FSKW), 335 to 442 (GKLL…FGTE), and 465 to 538 (TQLF…DNFW). Positions 550–598 (INTFINENKEEKEKEEEEKEEEEEEEEEEEEEEEEEKDNNKTTTIIKHL) form a coiled coil. Residues 555–592 (NENKEEKEKEEEEKEEEEEEEEEEEEEEEEEKDNNKTT) are disordered. A compositionally biased stretch (acidic residues) spans 562–586 (EKEEEEKEEEEEEEEEEEEEEEEEK). Residues 614 to 692 (IFKADQINPF…EQYNESPLFK (79 aa)) form a Gelsolin-like 5 repeat. Residues 710–912 (IISYKQKLAE…ETVNEENEVG (203 aa)) adopt a coiled-coil conformation. Basic and acidic residues-rich tracts occupy residues 732–770 (KQQQ…KEEE), 779–808 (EEVK…KEVN), 817–840 (EEVK…KEEE), and 849–900 (EEVK…KVNE). The interval 732-1087 (KQQQEQEQEQ…HNRSSSLTHA (356 aa)) is disordered. Positions 901-910 (ENETVNEENE) are enriched in acidic residues. 2 stretches are compositionally biased toward polar residues: residues 925–939 (ANSS…NEGS) and 950–961 (EPITPSVVSSSG). Residues 983 to 1002 (QGRKGGRKSHGKNQPQHKKN) are compositionally biased toward basic residues. Residues 1018-1040 (KSLNLDIDNQSFDLNSINNNNSV) show a composition bias toward polar residues. The segment covering 1047 to 1065 (SSPLSFSSSSINSNSTHNT) has biased composition (low complexity). Over residues 1066–1080 (PSKKNKNKNKKKHNR) the composition is skewed to basic residues.

It belongs to the villin/gelsolin family. In terms of assembly, interacts with rasD and abpC.

It localises to the cytoplasmic vesicle. Functionally, involved in phototaxis. Required for coupling photodetection to the locomotory machinery of slugs. May be essential in the natural environment for the propagation of spores. The protein is Gelsolin-related protein of 125 kDa (gnrA) of Dictyostelium discoideum (Social amoeba).